The following is a 153-amino-acid chain: ORM1-like protein 2 (153 aa).

Residues 1–21 are Cytoplasmic-facing; it reads MNVGVAHSEVNPNTRVMSSRG. 2 helical membrane-spanning segments follow: residues 22–42 and 43–63; these read IWLA…SIPF and FSIP…MYLL. Topologically, residues 64 to 105 are cytoplasmic; it reads LHTVKGTPFETPDQGKDRLLTHWEQIDYGMQCTSSRKFLSIS. A helical transmembrane segment spans residues 106-126; that stretch reads PVVLYLLTSFYIKYDPAHFMI. The Extracellular segment spans residues 127–153; that stretch reads NTASLLSVLLPKLPQFHGVRVFGINKY.

This sequence belongs to the ORM family. In terms of assembly, ceramide-sensitive subunit of the serine palmitoyltransferase (SPT) complex, which is also composed of SPTLC1, SPTLC2/3 and SPTSSA/B.

The protein resides in the endoplasmic reticulum membrane. Plays an essential role in the homeostatic regulation of sphingolipid de novo biosynthesis by modulating the activity of the serine palmitoyltransferase (SPT) in response to ceramide levels. When complexed to SPT, the binding of ceramides to its N-terminus stabilizes a conformation that block SPT substrate entry, hence preventing SPT catalytic activity. Through this mechanism, maintains ceramide levels at sufficient concentrations for the production of complex sphingolipids, but which prevents the accumulation of ceramides to levels that trigger apoptosis. This is ORM1-like protein 2 (ORMDL2) from Gallus gallus (Chicken).